The following is a 477-amino-acid chain: Cytochrome P450 716A1 (477 aa).

The chain crosses the membrane as a helical span at residues 2–22 (YMAIMIILFLSSILLSLLLLL). C424 is a heme binding site.

Belongs to the cytochrome P450 family. The cofactor is heme.

The protein resides in the membrane. Its function is as follows. Possesses triterpene oxidizing activity. Catalyzes the C28 hydroxylation of alpha-amyrin, beta-amyrin, and lupeol, producing uvaol, erythrodiol, and betulin, respectively. Catalyzes the C28 carboxylation of alpha- and beta-amyrin. This Arabidopsis thaliana (Mouse-ear cress) protein is Cytochrome P450 716A1.